The chain runs to 512 residues: Cobyric acid synthase (512 aa).

Residues 251–451 (ALDITVIRLP…IHGLFDSANF (201 aa)) form the GATase cobBQ-type domain. The active-site Nucleophile is the Cys332. Residue His443 is part of the active site.

The protein belongs to the CobB/CobQ family. CobQ subfamily.

It participates in cofactor biosynthesis; adenosylcobalamin biosynthesis. Catalyzes amidations at positions B, D, E, and G on adenosylcobyrinic A,C-diamide. NH(2) groups are provided by glutamine, and one molecule of ATP is hydrogenolyzed for each amidation. The chain is Cobyric acid synthase from Photorhabdus laumondii subsp. laumondii (strain DSM 15139 / CIP 105565 / TT01) (Photorhabdus luminescens subsp. laumondii).